A 71-amino-acid chain; its full sequence is MRKSFYSWLMTQRNPKSNEPVAILADLVFDDTTFPKHTNDFELISRYLEDQASFSFNLGQFDEIWEDYLAH.

The protein belongs to the UPF0346 family.

The polypeptide is UPF0346 protein MGAS2096_Spy0401 (Streptococcus pyogenes serotype M12 (strain MGAS2096)).